The sequence spans 190 residues: MDSSEVVKVKQASIPAPGSILSQPNTEQSPAIVLPFQFEATTFGTAETAAQVSLQTADPITKLTAPYRHAQIVECKAILTPTDLAVSNPLTVYLAWVPANSPATPTQILKLRVYGGQSFVLGGAISAAKTIEVPLNLDSVNRMLKDSVTYTDTPKLLAYSRAPTNPSKIPTASIQISGRIRLSKPMLIAN.

Residue methionine 1 is modified to N-acetylmethionine; by host.

Belongs to the tymoviruses capsid protein family.

The protein localises to the virion. In terms of biological role, self-assembles to form a T=3 icosahedral capsid composed of 180 copies of the capsid protein. The capsid encapsulates the single-stranded RNA genome. The chain is Capsid protein from Atropa belladonna (Belladonna).